The primary structure comprises 418 residues: MTRLVTLELLMAGIGSALLCFPDCILGEDTLFHEDQDKGTQLDSLTLASINTDFAFSLYKKLALRNPDKNVVFSPLSISAALAVVSLGAKGNSMEEILEGLKFNLTETPETEIHRGFGHLLQRLSQPRDEIQISTGNALFIEKRLQVLAEFQEKAKALYQAEAFTADFQQSREAKKLINDYVSKQTQGKIQGLITNLAKKTSMVLVNYIYFKGKWKVPFDPRDTFQSEFYSGKRRPVKVPMMKLEDLTTPYVRDEELNCTVVELKYTGNASALFILPDQGKMQQVEASLQPETLRRWKDSLRPSMIDELYLPKFSISADYNLEDVLPELGIKEVFSTQADLSGITGDKDLMVSQVVHKAVLDVAETGTEAAAATGVKFVPMSAKLDPLIIAFDRPFLMIISDTETAIAPFLAKIFNPK.

The signal sequence occupies residues 1–29; the sequence is MTRLVTLELLMAGIGSALLCFPDCILGED. Ser-93 is subject to Phosphoserine. Residues Asn-104, Asn-258, and Asn-269 are each glycosylated (N-linked (GlcNAc...) asparagine). The tract at residues 367 to 394 is RCL; the sequence is GTEAAAATGVKFVPMSAKLDPLIIAFDR.

The protein belongs to the serpin family. In terms of processing, N-glycosylated. In terms of tissue distribution, liver.

Its subcellular location is the secreted. The sequence is that of Serine protease inhibitor A3N (Serpina3n) from Rattus norvegicus (Rat).